The sequence spans 282 residues: Diaminopimelate epimerase (282 aa).

3 residues coordinate substrate: asparagine 13, glutamine 45, and asparagine 64. Cysteine 73 functions as the Proton donor in the catalytic mechanism. Residues glycine 74–asparagine 75, asparagine 155, asparagine 189, and glutamate 207–arginine 208 contribute to the substrate site. Cysteine 216 (proton acceptor) is an active-site residue. Glycine 217–serine 218 provides a ligand contact to substrate.

The protein belongs to the diaminopimelate epimerase family. Homodimer.

It localises to the cytoplasm. The enzyme catalyses (2S,6S)-2,6-diaminopimelate = meso-2,6-diaminopimelate. The protein operates within amino-acid biosynthesis; L-lysine biosynthesis via DAP pathway; DL-2,6-diaminopimelate from LL-2,6-diaminopimelate: step 1/1. Its function is as follows. Catalyzes the stereoinversion of LL-2,6-diaminopimelate (L,L-DAP) to meso-diaminopimelate (meso-DAP), a precursor of L-lysine and an essential component of the bacterial peptidoglycan. This Bartonella bacilliformis (strain ATCC 35685 / KC583 / Herrer 020/F12,63) protein is Diaminopimelate epimerase.